A 350-amino-acid polypeptide reads, in one-letter code: Atypical chemokine receptor 4 (350 aa).

At 1–41 the chain is on the extracellular side; it reads MAVEYNQSTDYYYEENEMNDTHDYSQYEVICIKEEVRKFAK. Asn6 and Asn19 each carry an N-linked (GlcNAc...) asparagine glycan. Residues 42–66 traverse the membrane as a helical segment; the sequence is VFLPAFFTIAFIIGLAGNSTVVAIY. At 67-79 the chain is on the cytoplasmic side; that stretch reads AYYKKRRTKTDVY. The chain crosses the membrane as a helical span at residues 80–99; that stretch reads ILNLAVADLFLLFTLPFWAV. At 100–113 the chain is on the extracellular side; that stretch reads NAVHGWVLGKIMCK. Cys112 and Cys184 are oxidised to a cystine. Residues 114–135 traverse the membrane as a helical segment; sequence VTSALYTVNFVSGMQFLACIST. Topologically, residues 136–153 are cytoplasmic; it reads DRYWAVTKAPSQSGVGKP. Residues 154–175 traverse the membrane as a helical segment; that stretch reads CWVICFCVWVAAILLSIPQLVF. Topologically, residues 176 to 199 are extracellular; the sequence is YTVNHKARCVPIFPYHLGTSMKAS. The chain crosses the membrane as a helical span at residues 200 to 222; sequence IQILEICIGFIIPFLIMAVCYFI. Topologically, residues 223–241 are cytoplasmic; the sequence is TAKTLIKMPNIKKSQPLKV. Residues 242 to 265 traverse the membrane as a helical segment; it reads LFTVVIVFIVTQLPYNIVKFCQAI. Topologically, residues 266–283 are extracellular; the sequence is DIIYSLITDCDMSKRMDV. A helical transmembrane segment spans residues 284-306; sequence AIQITESIALFHSCLNPVLYVFM. Over 307 to 350 the chain is Cytoplasmic; that stretch reads GTSFKNYIMKVAKKYGSWRRQRQNVEEIPFESEDATEPTSTFSI.

The protein belongs to the G-protein coupled receptor 1 family. Atypical chemokine receptor subfamily. Forms heteromers with CXCR3. Interacts with ARRB1 and ARRB2. The Ser/Thr residues in the C-terminal cytoplasmic tail may be phosphorylated. In terms of tissue distribution, expressed in circumvallate and fungiform papillae, olfactory epithelium and lung. Lower expression in liver, kidney and tongue epithelium bearing no taste papillae. Very low expression in the cerebral cortex of the brain.

It is found in the early endosome. It localises to the recycling endosome. Its subcellular location is the cell membrane. In terms of biological role, atypical chemokine receptor that controls chemokine levels and localization via high-affinity chemokine binding that is uncoupled from classic ligand-driven signal transduction cascades, resulting instead in chemokine sequestration, degradation, or transcytosis. Also known as interceptor (internalizing receptor) or chemokine-scavenging receptor or chemokine decoy receptor. Acts as a receptor for chemokines CCL2, CCL8, CCL13, CCL19, CCL21 and CCL25. Chemokine-binding does not activate G-protein-mediated signal transduction but instead induces beta-arrestin recruitment, leading to ligand internalization. Plays an important role in controlling the migration of immune and cancer cells that express chemokine receptors CCR7 and CCR9, by reducing the availability of CCL19, CCL21, and CCL25 through internalization. Negatively regulates CXCR3-induced chemotaxis. Regulates T-cell development in the thymus. The protein is Atypical chemokine receptor 4 (ACKR4) of Bos taurus (Bovine).